The chain runs to 158 residues: Non-secretory ribonuclease (158 aa).

The signal sequence occupies residues 1–27 (MVPKLFTSQICLLLLLGLSSLEVSLHA). Trp-34 carries C-linked (Man) tryptophan glycosylation. The Proton acceptor role is filled by His-42. Position 60 is a 3'-nitrotyrosine (Tyr-60). Position 65-69 (65-69 (KNRNT)) interacts with substrate. Residues Asn-86, Asn-92, and Asn-111 are each glycosylated (N-linked (GlcNAc...) asparagine). His-153 serves as the catalytic Proton donor.

It belongs to the pancreatic ribonuclease family. In terms of assembly, interacts with and forms a tight 1:1 complex with RNH1. Dimerization of two such complexes may occur.

Its subcellular location is the lysosome. It localises to the cytoplasmic granule. It carries out the reaction an [RNA] containing cytidine + H2O = an [RNA]-3'-cytidine-3'-phosphate + a 5'-hydroxy-ribonucleotide-3'-[RNA].. The catalysed reaction is an [RNA] containing uridine + H2O = an [RNA]-3'-uridine-3'-phosphate + a 5'-hydroxy-ribonucleotide-3'-[RNA].. Functionally, this is a non-secretory ribonuclease. It is a pyrimidine specific nuclease with a slight preference for U. Cytotoxin and helminthotoxin. Possesses a wide variety of biological activities. This is Non-secretory ribonuclease (RNASE2) from Saguinus labiatus (Red-chested mustached tamarin).